The sequence spans 642 residues: Frizzled and smoothened-like protein B (642 aa).

Positions 1–26 are cleaved as a signal peptide; sequence MFNKNNNNNKIIIILKLFLIILIVNN. Residues 27 to 264 are Extracellular-facing; that stretch reads NNNIKTFGLN…KWHQMYNMSK (238 aa). In terms of domain architecture, FZ spans 47-197; sequence DPTATCSNYI…GFFPVPCSDP (151 aa). Disulfide bonds link C52/C123, C65/C116, and C143/C194. N-linked (GlcNAc...) asparagine glycosylation is found at N80, N153, N162, N177, N203, N222, and N261. A helical transmembrane segment spans residues 265–285; that stretch reads ILSTISFVCSIYNVLTFGILN. The Cytoplasmic segment spans residues 286 to 294; it reads HRRSKYNYC. Residues 295 to 315 form a helical membrane-spanning segment; sequence ITFFSASVIIITMMDIVTYGI. Residues 316 to 344 lie on the Extracellular side of the membrane; that stretch reads GYEKLLCPEPGRFAVQSDVSCGATGALFH. A helical transmembrane segment spans residues 345-365; the sequence is IGITNGVFWWTTMSICLFAVV. Residues 366-375 lie on the Cytoplasmic side of the membrane; that stretch reads KRIKLFDFRY. Residues 376–398 traverse the membrane as a helical segment; the sequence is FIIFNTTASLISVIIPLAGNAFM. Topologically, residues 399–416 are extracellular; it reads AGTGSLACWIRKTWYVNS. Residues 417–437 form a helical membrane-spanning segment; it reads VFWIPCGIALTIGSVCIILVI. Residues 438-460 lie on the Cytoplasmic side of the membrane; it reads YEIYKITKNVSTKDNRMILLQIK. The helical transmembrane segment at 461–481 threads the bilayer; sequence PFLCVTLVGGSFYYLFIFNFD. The N-linked (GlcNAc...) asparagine glycan is linked to N482. The Extracellular segment spans residues 482–514; it reads NESHSKEYKEKVVDYVMCLLSDTGKECLMAGPN. Residues 515-535 form a helical membrane-spanning segment; the sequence is YVAYFVFYFFIRLFGITFFCI. Residues 536–642 lie on the Cytoplasmic side of the membrane; the sequence is YGTSQNARDI…INSASNTSSD (107 aa). The disordered stretch occupies residues 578 to 642; the sequence is GTNPTSNSKN…INSASNTSSD (65 aa). The segment covering 583-598 has biased composition (low complexity); it reads SNSKNSKNNQNNQNNN. A coiled-coil region spans residues 584 to 611; it reads NSKNSKNNQNNQNNNSRKEFESKNIELE. Residues 599 to 609 show a composition bias toward basic and acidic residues; the sequence is SRKEFESKNIE. 2 stretches are compositionally biased toward polar residues: residues 614-623 and 632-642; these read ESISKGQTTR and NINSASNTSSD.

This sequence belongs to the G-protein coupled receptor Fz/Smo family.

The protein localises to the membrane. This chain is Frizzled and smoothened-like protein B (fslB), found in Dictyostelium discoideum (Social amoeba).